The chain runs to 521 residues: Glucose-1-phosphate adenylyltransferase large subunit 2, chloroplastic/amyloplastic (521 aa).

The transit peptide at 1–47 (MQFSSVLPLEGKACMSPVRRGSGGYGSERMRINCCSIRRNKALRRMC) directs the protein to the chloroplast.

This sequence belongs to the bacterial/plant glucose-1-phosphate adenylyltransferase family. In terms of assembly, heterotetramer. Abundant in the embryo and is also present in the endosperm.

The protein resides in the plastid. It is found in the chloroplast. It localises to the amyloplast. It carries out the reaction alpha-D-glucose 1-phosphate + ATP + H(+) = ADP-alpha-D-glucose + diphosphate. It functions in the pathway glycan biosynthesis; starch biosynthesis. Its activity is regulated as follows. Activated by 3'phosphoglycerate, inhibited by orthophosphate. Allosteric regulation. This protein plays a role in synthesis of starch. It catalyzes the synthesis of the activated glycosyl donor, ADP-glucose from Glc-1-P and ATP. In Zea mays (Maize), this protein is Glucose-1-phosphate adenylyltransferase large subunit 2, chloroplastic/amyloplastic (AGP2).